We begin with the raw amino-acid sequence, 146 residues long: MAAYLLAVAILFCIQGWPLGTVQGQVMPFMEVYRHSVCQPRETLVSILEEYPGEIAHIFRPSCVTALRCGGCCTDESLECTATGKRSVGREIMRLSPHKGTSEKEVMQFTEHTDCECRPRSASGVNSRKHKRNPEEGEQRAKFPFV.

The N-terminal stretch at 1-24 is a signal peptide; the sequence is MAAYLLAVAILFCIQGWPLGTVQG. Q25 carries the post-translational modification Pyrrolidone carboxylic acid. Intrachain disulfides connect C38–C80, C69–C115, and C73–C117. Residues 118–146 are disordered; it reads RPRSASGVNSRKHKRNPEEGEQRAKFPFV. Residues 133–146 show a composition bias toward basic and acidic residues; the sequence is NPEEGEQRAKFPFV.

Belongs to the PDGF/VEGF growth factor family. Snake venom VEGF subfamily. As to quaternary structure, homodimer; disulfide-linked. Interacts with VEGF receptor-1 (FLT1) with a high affinity, whereas it binds to VEGF receptor-2 (KDR) with a low affinity. Does not bind VEGF receptor-3 (FLT4). As to expression, expressed by the venom gland.

The protein resides in the secreted. Snake venom VEGFs that may contribute to venom dispersion and prey subjugation by inducing vascular permeability and hypotension. This protein induces an increase in capillary permeability after intradermal injection, as well as a drastic hypotensive effect after intravenous injection. The hypotension is mediated by nitric oxide (NO), which is produced by VEGF-activated endothelium NO synthase. Also induces angiogenesis in vitro. Like other crotalid VEGFs, this protein interacts with VEGF receptor-1 (FLT1) with a high affinity, whereas it binds to VEGF receptor-2 (KDR) with a low affinity. In Bothrops erythromelas (Caatinga lance head), this protein is Snake venom vascular endothelial growth factor toxin.